A 62-amino-acid polypeptide reads, in one-letter code: MDANASRVDPKLLELLVCPLTKGRLRYDAEAHELVSEKARLAYPIRDGVPIMLVSEARKIED.

This sequence belongs to the UPF0434 family.

This chain is UPF0434 protein NGR_c31900, found in Sinorhizobium fredii (strain NBRC 101917 / NGR234).